The sequence spans 412 residues: Tyrosine--tRNA ligase (412 aa).

Y31 is an L-tyrosine binding site. The 'HIGH' region motif lies at 36–45; it reads PTAPSLHIGH. Positions 162 and 166 each coordinate L-tyrosine. The short motif at 222–226 is the 'KMSKS' region element; sequence KIGKT. Residue K225 participates in ATP binding. An S4 RNA-binding domain is found at 345–412; sequence KRWLDVVVQL…KKKKQVIDLN (68 aa).

The protein belongs to the class-I aminoacyl-tRNA synthetase family. TyrS type 1 subfamily. As to quaternary structure, homodimer.

It localises to the cytoplasm. The enzyme catalyses tRNA(Tyr) + L-tyrosine + ATP = L-tyrosyl-tRNA(Tyr) + AMP + diphosphate + H(+). Its function is as follows. Catalyzes the attachment of tyrosine to tRNA(Tyr) in a two-step reaction: tyrosine is first activated by ATP to form Tyr-AMP and then transferred to the acceptor end of tRNA(Tyr). The polypeptide is Tyrosine--tRNA ligase (Chlamydia muridarum (strain MoPn / Nigg)).